Here is a 1089-residue protein sequence, read N- to C-terminus: Electroneutral sodium bicarbonate exchanger 1 (1089 aa).

At Met-1–Cys-476 the chain is on the extracellular side. The tract at residues Leu-55–Leu-90 is disordered. The span at Gln-58 to Arg-76 shows a compositional bias: basic residues. Residues Leu-477–Leu-497 form a helical membrane-spanning segment. The Cytoplasmic segment spans residues Leu-498 to Arg-505. Residues Ile-506–Ala-526 form a helical membrane-spanning segment. The Extracellular segment spans residues Gly-527–Leu-563. Residues Ile-564–Val-584 form a helical membrane-spanning segment. The Cytoplasmic portion of the chain corresponds to Cys-585–Glu-593. The helical transmembrane segment at Ala-594–Leu-614 threads the bilayer. Over Ala-615–His-685 the chain is Extracellular. Disulfide bonds link Cys-634-Cys-682 and Cys-636-Cys-670. Asn-644 carries an N-linked (GlcNAc) asparagine glycan. The chain crosses the membrane as a helical span at residues Gly-686 to Val-706. Topologically, residues Ser-707 to Asp-729 are cytoplasmic. Residues Phe-730–Ser-750 traverse the membrane as a helical segment. The Extracellular portion of the chain corresponds to Pro-751–Asn-776. The chain crosses the membrane as a helical span at residues Pro-777–Met-797. The Cytoplasmic portion of the chain corresponds to Asp-798–Asp-822. Residues Leu-823–Ala-843 traverse the membrane as a helical segment. Residues Ala-844–Thr-879 lie on the Extracellular side of the membrane. A helical transmembrane segment spans residues Gly-880 to Ile-900. At Pro-901–Met-902 the chain is on the cytoplasmic side. A helical transmembrane segment spans residues Pro-903–Phe-923. At Asp-924–Cys-960 the chain is on the extracellular side. A helical transmembrane segment spans residues Leu-961–Leu-981. Residues Ala-982–Asn-1089 are Cytoplasmic-facing.

The protein belongs to the anion exchanger (TC 2.A.31) family. As to quaternary structure, homodimer. In terms of tissue distribution, expressed in the hippocampal neurons (at protein level). Highly expressed in brain with lower levels in lung, kidney and heart. In the kidney, there is high expression in the inner medulla, localized to the inner medullary collecting duct. In the brain, there seems to be three transcripts each having a different expression pattern. The smaller 3kb transcript has highest expression levels in the thalamus and the largest 9.5kb transcript has highest levels in the substantia nigra. The middle transcript of 4.4kb, which is also the main transcript in kidney, is highly expressed in thalamus. Hence, the highest levels are observed in the thalamus, amygdala and caudate nucleus and very low expression was seen in the corpus callosum.

The protein resides in the cell membrane. The protein localises to the apical cell membrane. It localises to the basolateral cell membrane. Its subcellular location is the cytoplasmic vesicle. It is found in the secretory vesicle. The protein resides in the synaptic vesicle membrane. It carries out the reaction 2 hydrogencarbonate(out) + chloride(in) + Na(+)(out) = 2 hydrogencarbonate(in) + chloride(out) + Na(+)(in). Mediates electroneutral sodium- and carbonate-dependent chloride-HCO3(-) exchange with a Na(+):HCO3(-) stoichiometry of 2:1. Plays a major role in pH regulation in neurons. Mediates sodium reabsorption in the renal cortical collecting ducts. The protein is Electroneutral sodium bicarbonate exchanger 1 of Mus musculus (Mouse).